Here is a 293-residue protein sequence, read N- to C-terminus: MKNLKGIFSALLVSFNADGSINEKGLRQIVRYNIDKMKVDGLYVGGSTGENFMLSTEEKKEIFRIAKDEAKDEIALIAQVGSVNLQEAIELGKYATELGYDSLSAVTPFYYKFSFPEIKHYYDSIIEATGNYMIVYSIPFLTGVNIGVEQFGELYKNPKVLGVKFTAGDFYLLERLKKAYPNHLIWAGFDEMMLPAASLGVDGAIGSTFNVNGVRARQIFELTQAGKLKEALEIQHVTNDLIEGILANGLYLTIKELLKLDGVEAGYCREPMTKELSPEKVAFAKELKAKYLS.

S47, T48, and Y136 together coordinate aceneuramate. Y136 (proton donor) is an active-site residue. K164 serves as the catalytic Schiff-base intermediate with substrate. Residues T166, G188, D190, E191, S207, and Y251 each coordinate aceneuramate.

The protein belongs to the DapA family. NanA subfamily. In terms of assembly, homotetramer.

It localises to the cytoplasm. The catalysed reaction is aceneuramate = aldehydo-N-acetyl-D-mannosamine + pyruvate. Its pathway is amino-sugar metabolism; N-acetylneuraminate degradation; D-fructose 6-phosphate from N-acetylneuraminate: step 1/5. Its function is as follows. Catalyzes the reversible aldol cleavage of N-acetylneuraminic acid (sialic acid; Neu5Ac) to form pyruvate and N-acetylmannosamine (ManNAc) via a Schiff base intermediate. This is N-acetylneuraminate lyase from Pasteurella multocida (strain Pm70).